We begin with the raw amino-acid sequence, 580 residues long: RuBisCO large subunit-binding protein subunit alpha, chloroplastic (580 aa).

The segment covering 1-17 has biased composition (polar residues); sequence MAQSQLAKGSRQTTGRP. Residues 1–24 are disordered; the sequence is MAQSQLAKGSRQTTGRPFQNKPAR.

This sequence belongs to the chaperonin (HSP60) family. Oligomer of probably six alpha and six beta subunits.

It localises to the plastid. It is found in the chloroplast. Functionally, this protein binds RuBisCO small and large subunits and is implicated in the assembly of the enzyme oligomer. The sequence is that of RuBisCO large subunit-binding protein subunit alpha, chloroplastic from Chlamydomonas reinhardtii (Chlamydomonas smithii).